We begin with the raw amino-acid sequence, 388 residues long: Succinate--CoA ligase [ADP-forming] subunit beta (388 aa).

Positions 9–244 constitute an ATP-grasp domain; the sequence is KQLFARYGMP…PSQEDAREAH (236 aa). ATP is bound by residues lysine 46, 53 to 55, glutamate 99, threonine 102, and glutamate 107; that span reads GRG. Mg(2+)-binding residues include asparagine 199 and aspartate 213. Substrate is bound by residues asparagine 264 and 321 to 323; that span reads GIV.

Belongs to the succinate/malate CoA ligase beta subunit family. In terms of assembly, heterotetramer of two alpha and two beta subunits. It depends on Mg(2+) as a cofactor.

It catalyses the reaction succinate + ATP + CoA = succinyl-CoA + ADP + phosphate. The enzyme catalyses GTP + succinate + CoA = succinyl-CoA + GDP + phosphate. The protein operates within carbohydrate metabolism; tricarboxylic acid cycle; succinate from succinyl-CoA (ligase route): step 1/1. Functionally, succinyl-CoA synthetase functions in the citric acid cycle (TCA), coupling the hydrolysis of succinyl-CoA to the synthesis of either ATP or GTP and thus represents the only step of substrate-level phosphorylation in the TCA. The beta subunit provides nucleotide specificity of the enzyme and binds the substrate succinate, while the binding sites for coenzyme A and phosphate are found in the alpha subunit. This chain is Succinate--CoA ligase [ADP-forming] subunit beta, found in Yersinia pseudotuberculosis serotype O:1b (strain IP 31758).